The following is a 193-amino-acid chain: Imidazoleglycerol-phosphate dehydratase (193 aa).

Belongs to the imidazoleglycerol-phosphate dehydratase family.

Its subcellular location is the cytoplasm. It catalyses the reaction D-erythro-1-(imidazol-4-yl)glycerol 3-phosphate = 3-(imidazol-4-yl)-2-oxopropyl phosphate + H2O. Its pathway is amino-acid biosynthesis; L-histidine biosynthesis; L-histidine from 5-phospho-alpha-D-ribose 1-diphosphate: step 6/9. The protein is Imidazoleglycerol-phosphate dehydratase of Saccharolobus islandicus (strain Y.N.15.51 / Yellowstone #2) (Sulfolobus islandicus).